We begin with the raw amino-acid sequence, 353 residues long: MSKNKLSKGQQRRVNANHQRRLKTTAEKADYDDNLFGETSEGIVISRFGMHADVESADGSVHRCNIRRTIRSLVTGDRVVWRPGKDAADGVNVKGIVEAVHERASVLTRPDFYDGVKPIAANIDQIVVVSAILPELSLNIIDRYLVACEAQDIEPLIVLNKIDLLDDDGLRFVNEQMDIYRNIGYRVLMVSSRTQDGLKPLEAALTDRISIFAGQSGVGKSSLLNALLGLNEDQILTNDVSDVSGLGQHTTTAARLYHFPHGGDVIDSPGVREFGLWHLEAEQITHGFVEFHDYLGHCKYRDCKHDNDPGCALREAVENGKIAESRFENYHRILESMEQVQVKTRKNFSSSDD.

Polar residues predominate over residues 1-17; that stretch reads MSKNKLSKGQQRRVNAN. Residues 1-25 form a disordered region; that stretch reads MSKNKLSKGQQRRVNANHQRRLKTT. The region spanning 104 to 274 is the CP-type G domain; that stretch reads ASVLTRPDFY…VIDSPGVREF (171 aa). GTP contacts are provided by residues 160 to 163 and 214 to 222; these read NKID and GQSGVGKSS. Positions 298, 303, 305, and 311 each coordinate Zn(2+).

It belongs to the TRAFAC class YlqF/YawG GTPase family. RsgA subfamily. As to quaternary structure, monomer. Associates with 30S ribosomal subunit, binds 16S rRNA. Requires Zn(2+) as cofactor.

It localises to the cytoplasm. In terms of biological role, one of several proteins that assist in the late maturation steps of the functional core of the 30S ribosomal subunit. Helps release RbfA from mature subunits. May play a role in the assembly of ribosomal proteins into the subunit. Circularly permuted GTPase that catalyzes slow GTP hydrolysis, GTPase activity is stimulated by the 30S ribosomal subunit. The sequence is that of Small ribosomal subunit biogenesis GTPase RsgA from Klebsiella pneumoniae (strain 342).